A 360-amino-acid polypeptide reads, in one-letter code: Photosystem II protein D1 2 (360 aa).

Helical transmembrane passes span 29 to 46 (YIGW…AATT), 118 to 133 (HFLT…EWEL), and 142 to 156 (WICL…AATA). Residue His118 participates in chlorophyll a binding. Tyr126 provides a ligand contact to pheophytin a. The [CaMn4O5] cluster site is built by Asp170 and Glu189. A helical membrane pass occupies residues 197-218 (FHMLGVAGVFGGSLFSAMHGSL). A chlorophyll a-binding site is contributed by His198. Residues His215 and 264–265 (SF) contribute to the a quinone site. Residue His215 participates in Fe cation binding. A Fe cation-binding site is contributed by His272. A helical membrane pass occupies residues 274 to 288 (FLAAWPVIGIWFTAL). [CaMn4O5] cluster-binding residues include His332, Glu333, Asp342, and Ala344. A propeptide spanning residues 345 to 360 (AGEVAPVALTAPAING) is cleaved from the precursor.

The protein belongs to the reaction center PufL/M/PsbA/D family. In terms of assembly, PSII is composed of 1 copy each of membrane proteins PsbA, PsbB, PsbC, PsbD, PsbE, PsbF, PsbH, PsbI, PsbJ, PsbK, PsbL, PsbM, PsbT, PsbX, PsbY, PsbZ, Psb30/Ycf12, peripheral proteins PsbO, CyanoQ (PsbQ), PsbU, PsbV and a large number of cofactors. It forms dimeric complexes. Requires The D1/D2 heterodimer binds P680, chlorophylls that are the primary electron donor of PSII, and subsequent electron acceptors. It shares a non-heme iron and each subunit binds pheophytin, quinone, additional chlorophylls, carotenoids and lipids. D1 provides most of the ligands for the Mn4-Ca-O5 cluster of the oxygen-evolving complex (OEC). There is also a Cl(-1) ion associated with D1 and D2, which is required for oxygen evolution. The PSII complex binds additional chlorophylls, carotenoids and specific lipids. as cofactor. In terms of processing, tyr-161 forms a radical intermediate that is referred to as redox-active TyrZ, YZ or Y-Z. Post-translationally, C-terminally processed by CtpA; processing is essential to allow assembly of the oxygen-evolving complex and thus photosynthetic growth.

It is found in the cellular thylakoid membrane. The enzyme catalyses 2 a plastoquinone + 4 hnu + 2 H2O = 2 a plastoquinol + O2. Its function is as follows. Photosystem II (PSII) is a light-driven water:plastoquinone oxidoreductase that uses light energy to abstract electrons from H(2)O, generating O(2) and a proton gradient subsequently used for ATP formation. It consists of a core antenna complex that captures photons, and an electron transfer chain that converts photonic excitation into a charge separation. The D1/D2 (PsbA/PsbD) reaction center heterodimer binds P680, the primary electron donor of PSII as well as several subsequent electron acceptors. This is Photosystem II protein D1 2 from Trichormus variabilis (strain ATCC 29413 / PCC 7937) (Anabaena variabilis).